The chain runs to 197 residues: Nucleoid occlusion factor SlmA (197 aa).

An HTH tetR-type domain is found at 7–67 (INRREHILQC…GLIEFIEESL (61 aa)). The H-T-H motif DNA-binding region spans 30-49 (TTAKLASEVGVSEAALYRHF).

Belongs to the nucleoid occlusion factor SlmA family. As to quaternary structure, homodimer. Interacts with FtsZ.

Its subcellular location is the cytoplasm. The protein resides in the nucleoid. Its function is as follows. Required for nucleoid occlusion (NO) phenomenon, which prevents Z-ring formation and cell division over the nucleoid. Acts as a DNA-associated cell division inhibitor that binds simultaneously chromosomal DNA and FtsZ, and disrupts the assembly of FtsZ polymers. SlmA-DNA-binding sequences (SBS) are dispersed on non-Ter regions of the chromosome, preventing FtsZ polymerization at these regions. This chain is Nucleoid occlusion factor SlmA, found in Shewanella sp. (strain MR-7).